Consider the following 222-residue polypeptide: Protein-L-isoaspartate O-methyltransferase (222 aa).

The active site involves S70.

It belongs to the methyltransferase superfamily. L-isoaspartyl/D-aspartyl protein methyltransferase family.

The protein localises to the cytoplasm. It catalyses the reaction [protein]-L-isoaspartate + S-adenosyl-L-methionine = [protein]-L-isoaspartate alpha-methyl ester + S-adenosyl-L-homocysteine. Functionally, catalyzes the methyl esterification of L-isoaspartyl residues in peptides and proteins that result from spontaneous decomposition of normal L-aspartyl and L-asparaginyl residues. It plays a role in the repair and/or degradation of damaged proteins. In Jannaschia sp. (strain CCS1), this protein is Protein-L-isoaspartate O-methyltransferase.